A 200-amino-acid polypeptide reads, in one-letter code: MYAYFRGRLVSCLPEEAVLEVSGIAYRFLVSAGTARQLPEVGTETILYTHLSVREDALQLYGFATEEEKQLFRLLLLTSGVGPKLALAVLSGMAVPEVHEAILANAPERLFGITGVGRKTAARIILELRDKILKLAPVGSAVASVAADRGGFREDAVNALMTLGFPRPVANQAVGCALEPEPDASLEVVIKRALATMHNR.

The tract at residues 1–64 (MYAYFRGRLV…EDALQLYGFA (64 aa)) is domain I. A domain II region spans residues 65 to 143 (TEEEKQLFRL…KLAPVGSAVA (79 aa)). The tract at residues 144-154 (SVAADRGGFRE) is flexible linker. A domain III region spans residues 154-200 (EDAVNALMTLGFPRPVANQAVGCALEPEPDASLEVVIKRALATMHNR).

The protein belongs to the RuvA family. As to quaternary structure, homotetramer. Forms an RuvA(8)-RuvB(12)-Holliday junction (HJ) complex. HJ DNA is sandwiched between 2 RuvA tetramers; dsDNA enters through RuvA and exits via RuvB. An RuvB hexamer assembles on each DNA strand where it exits the tetramer. Each RuvB hexamer is contacted by two RuvA subunits (via domain III) on 2 adjacent RuvB subunits; this complex drives branch migration. In the full resolvosome a probable DNA-RuvA(4)-RuvB(12)-RuvC(2) complex forms which resolves the HJ.

Its subcellular location is the cytoplasm. Its function is as follows. The RuvA-RuvB-RuvC complex processes Holliday junction (HJ) DNA during genetic recombination and DNA repair, while the RuvA-RuvB complex plays an important role in the rescue of blocked DNA replication forks via replication fork reversal (RFR). RuvA specifically binds to HJ cruciform DNA, conferring on it an open structure. The RuvB hexamer acts as an ATP-dependent pump, pulling dsDNA into and through the RuvAB complex. HJ branch migration allows RuvC to scan DNA until it finds its consensus sequence, where it cleaves and resolves the cruciform DNA. In Chlorobium phaeovibrioides (strain DSM 265 / 1930) (Prosthecochloris vibrioformis (strain DSM 265)), this protein is Holliday junction branch migration complex subunit RuvA.